The primary structure comprises 475 residues: Trifunctional enzyme subunit beta, mitochondrial (475 aa).

Residues 1 to 34 (MTTILTCPFKKLPTTSKWALRFAIRPLSCSSQLR) constitute a mitochondrion transit peptide. Lys-73 bears the N6-acetyllysine; alternate mark. Lys-73 carries the post-translational modification N6-succinyllysine; alternate. Cys-139 functions as the Acyl-thioester intermediate in the catalytic mechanism. An intramembrane segment occupies 174–221 (IRHSRKMRKLMLDLNKAKSMGQRLSLISKFRLNFLAPELPAVAEFSTS). At Lys-189 the chain carries N6-acetyllysine; alternate. N6-succinyllysine; alternate is present on Lys-189. N6-succinyllysine occurs at positions 191, 273, and 292. An N6-acetyllysine; alternate modification is found at Lys-294. Lys-294 is modified (N6-succinyllysine; alternate). An N6-acetyllysine modification is found at Lys-299. At Lys-333 the chain carries N6-acetyllysine; alternate. At Lys-333 the chain carries N6-succinyllysine; alternate. An N6-acetyllysine mark is found at Lys-349 and Lys-362. The Proton donor/acceptor role is filled by Cys-459.

Belongs to the thiolase-like superfamily. Thiolase family. In terms of assembly, heterotetramer of 2 alpha/HADHA and 2 beta/HADHB subunits; forms the mitochondrial trifunctional enzyme. Also purified as higher order heterooligomers including a 4 alpha/HADHA and 4 beta/HADHB heterooligomer which physiological significance remains unclear. The mitochondrial trifunctional enzyme interacts with MTLN. Interacts with RSAD2/viperin.

Its subcellular location is the mitochondrion. It is found in the mitochondrion inner membrane. The protein localises to the mitochondrion outer membrane. The protein resides in the endoplasmic reticulum. The catalysed reaction is an acyl-CoA + acetyl-CoA = a 3-oxoacyl-CoA + CoA. It catalyses the reaction butanoyl-CoA + acetyl-CoA = 3-oxohexanoyl-CoA + CoA. The enzyme catalyses hexanoyl-CoA + acetyl-CoA = 3-oxooctanoyl-CoA + CoA. It carries out the reaction octanoyl-CoA + acetyl-CoA = 3-oxodecanoyl-CoA + CoA. The catalysed reaction is decanoyl-CoA + acetyl-CoA = 3-oxododecanoyl-CoA + CoA. It catalyses the reaction dodecanoyl-CoA + acetyl-CoA = 3-oxotetradecanoyl-CoA + CoA. The enzyme catalyses tetradecanoyl-CoA + acetyl-CoA = 3-oxohexadecanoyl-CoA + CoA. It functions in the pathway lipid metabolism; fatty acid beta-oxidation. Mitochondrial trifunctional enzyme catalyzes the last three of the four reactions of the mitochondrial beta-oxidation pathway. The mitochondrial beta-oxidation pathway is the major energy-producing process in tissues and is performed through four consecutive reactions breaking down fatty acids into acetyl-CoA. Among the enzymes involved in this pathway, the trifunctional enzyme exhibits specificity for long-chain fatty acids. Mitochondrial trifunctional enzyme is a heterotetrameric complex composed of two proteins, the trifunctional enzyme subunit alpha/HADHA carries the 2,3-enoyl-CoA hydratase and the 3-hydroxyacyl-CoA dehydrogenase activities, while the trifunctional enzyme subunit beta/HADHB described here bears the 3-ketoacyl-CoA thiolase activity. This is Trifunctional enzyme subunit beta, mitochondrial (HADHB) from Macaca fascicularis (Crab-eating macaque).